Consider the following 285-residue polypeptide: Homeobox protein Hox-A13b (285 aa).

Residues 219-278 (GRKKRVPYTKVQLKELEREYAANKFITKDKRRRISAQTNLTERQVTIWFQNRRVKEKKVV) constitute a DNA-binding region (homeobox).

It belongs to the Abd-B homeobox family.

Its subcellular location is the nucleus. Sequence-specific transcription factor which is part of a developmental regulatory system that provides cells with specific positional identities on the anterior-posterior axis. In Takifugu rubripes (Japanese pufferfish), this protein is Homeobox protein Hox-A13b (hoxa13b).